A 718-amino-acid chain; its full sequence is Methionine--tRNA ligase (718 aa).

Residues 27-37 (PYANGQIHIGH) carry the 'HIGH' region motif. Zn(2+) contacts are provided by cysteine 158, cysteine 161, cysteine 171, and cysteine 174. Residues 348-352 (KMSKS) carry the 'KMSKS' region motif. Lysine 351 provides a ligand contact to ATP. Positions 612 to 718 (DFAKIDLRIA…SGAKPGMRVK (107 aa)) constitute a tRNA-binding domain.

The protein belongs to the class-I aminoacyl-tRNA synthetase family. MetG type 1 subfamily. As to quaternary structure, homodimer. The cofactor is Zn(2+).

It is found in the cytoplasm. The enzyme catalyses tRNA(Met) + L-methionine + ATP = L-methionyl-tRNA(Met) + AMP + diphosphate. Functionally, is required not only for elongation of protein synthesis but also for the initiation of all mRNA translation through initiator tRNA(fMet) aminoacylation. This Burkholderia cenocepacia (strain ATCC BAA-245 / DSM 16553 / LMG 16656 / NCTC 13227 / J2315 / CF5610) (Burkholderia cepacia (strain J2315)) protein is Methionine--tRNA ligase.